The sequence spans 430 residues: MKTSKEITINKKNKFGAEILCIGSEILLGNIVNTNSQWIAAQLAILGIPHFRQTVIGDNPARLEEAILEASNRSEILITTGGLGPTPDDIKTKVIADTFKTPLEQRNDILIDLRNKSKDKVSKLSESQKKQSLVPKGAKIINNYSGTAPGIFWSPKENFTILTFPGVPSELKEMWAKEASKLLISNNLSKEVISSKVLHFAGITESLLADKIQHLLISKNPTVATYASTGSVKVRITARGKSSEKTNRLIEPIKKELTQITGLKCFGLDNETLEEIVFKLLLKRKETIAVAESCTGGGIGSKLTKIPGSSQIFHGGVIAYNNSIKQRLLGVPEEIINTHGAVSKQVVESMARGVQIKFKVNWAISVSGIAGPTGGSKSKPVGLVNFCIKGPKTLITWEENFGSNKTREDIQKLSVLNALDRLRLSIIMAN.

Belongs to the CinA family.

This Prochlorococcus marinus (strain NATL2A) protein is CinA-like protein.